Consider the following 345-residue polypeptide: Anthranilate phosphoribosyltransferase (345 aa).

5-phospho-alpha-D-ribose 1-diphosphate is bound by residues G79, G82–D83, T87, N89–T92, K106–G114, and S118. Residue G79 participates in anthranilate binding. S91 is a Mg(2+) binding site. Residue N109 coordinates anthranilate. R164 contributes to the anthranilate binding site. Residues D223 and E224 each contribute to the Mg(2+) site.

This sequence belongs to the anthranilate phosphoribosyltransferase family. Homodimer. It depends on Mg(2+) as a cofactor.

It carries out the reaction N-(5-phospho-beta-D-ribosyl)anthranilate + diphosphate = 5-phospho-alpha-D-ribose 1-diphosphate + anthranilate. It functions in the pathway amino-acid biosynthesis; L-tryptophan biosynthesis; L-tryptophan from chorismate: step 2/5. Functionally, catalyzes the transfer of the phosphoribosyl group of 5-phosphorylribose-1-pyrophosphate (PRPP) to anthranilate to yield N-(5'-phosphoribosyl)-anthranilate (PRA). This chain is Anthranilate phosphoribosyltransferase, found in Saccharolobus islandicus (strain L.S.2.15 / Lassen #1) (Sulfolobus islandicus).